A 536-amino-acid chain; its full sequence is Phosphoenolpyruvate carboxykinase (ATP) (536 aa).

Residues Arg-61, Tyr-195, and Lys-201 each contribute to the substrate site. Residues Lys-201, His-220, and 236–244 (GLSGTGKTT) each bind ATP. Lys-201 and His-220 together coordinate Mn(2+). A Mn(2+)-binding site is contributed by Asp-257. ATP is bound by residues Glu-285, Arg-322, and Thr-447. Arg-322 serves as a coordination point for substrate.

It belongs to the phosphoenolpyruvate carboxykinase (ATP) family. Mn(2+) is required as a cofactor.

It localises to the cytoplasm. It catalyses the reaction oxaloacetate + ATP = phosphoenolpyruvate + ADP + CO2. It participates in carbohydrate biosynthesis; gluconeogenesis. Its function is as follows. Involved in the gluconeogenesis. Catalyzes the conversion of oxaloacetate (OAA) to phosphoenolpyruvate (PEP) through direct phosphoryl transfer between the nucleoside triphosphate and OAA. The sequence is that of Phosphoenolpyruvate carboxykinase (ATP) from Mesorhizobium japonicum (strain LMG 29417 / CECT 9101 / MAFF 303099) (Mesorhizobium loti (strain MAFF 303099)).